The sequence spans 455 residues: Venom prothrombin activator trocarin-D (455 aa).

Residues 1 to 20 form the signal peptide; it reads MAPQLLLCLILTFLWSLPEA. Residues 21–40 constitute a propeptide that is removed on maturation; sequence ESNVFLKSKVANRFLQRTKR. The Gla domain occupies 41–86; the sequence is SNSLFEEIRPGNIERECIEEKCSKEEAREVFEDNEKTETFWNVYVD. 11 positions are modified to 4-carboxyglutamate: glutamate 46, glutamate 47, glutamate 54, glutamate 56, glutamate 59, glutamate 60, glutamate 65, glutamate 66, glutamate 69, glutamate 72, and glutamate 75. A disulfide bridge links cysteine 57 with cysteine 62. One can recognise an EGF-like 1; calcium-binding domain in the interval 86-122; the sequence is DGDQCSSNPCHYRGTCKDGIGSYTCTCLPNYEGKNCE. 11 disulfides stabilise this stretch: cysteine 90-cysteine 101, cysteine 95-cysteine 110, cysteine 112-cysteine 121, cysteine 129-cysteine 140, cysteine 136-cysteine 149, cysteine 151-cysteine 164, cysteine 172-cysteine 328, cysteine 216-cysteine 221, cysteine 236-cysteine 252, cysteine 376-cysteine 390, and cysteine 401-cysteine 429. The O-linked (Hex...) serine glycan is linked to serine 92. One can recognise an EGF-like 2 domain in the interval 129-164; that stretch reads CRVDNGNCWHFCKRVQSETQCSCAESYRLGVDGHSC. Positions 182-209 are cleaved as a propeptide — activation peptide; the sequence is REASLPDFVQSQKATLLKKSDNPSPDIR. The region spanning 210–453 is the Peptidase S1 domain; it reads IVNGMDCKLG…FIPWIKKIMS (244 aa). Catalysis depends on histidine 251, which acts as the Charge relay system. Asparagine 254 is a glycosylation site (N-linked (GlcNAc...) asparagine). The active-site Charge relay system is the aspartate 308. The active-site Charge relay system is serine 405.

The protein belongs to the peptidase S1 family. Snake venom subfamily. In terms of assembly, heterodimer of a light chain and a heavy chain; disulfide-linked. Post-translationally, gamma-carboxyglutamate residues are formed by vitamin K dependent carboxylation. These residues are essential for the binding of calcium. In terms of processing, the O-linked saccharides at Ser-92 are a mixture of Xyl-Glc, and Glc along with smaller amounts of Xyl-GlcNAc, GlcNAc, Gal, GalNAc, Xyl-Gal, and Xyl-GalNAc, suggesting that the glycosyl transferases responsible for this modification are non-specific. The N-linked carbohydrate at Asn-254 (Asn-45 of the heavy chain) is a sialylated and diantennary oligosaccharide. As to expression, expressed by the venom gland.

It localises to the secreted. It carries out the reaction Selective cleavage of Arg-|-Thr and then Arg-|-Ile bonds in prothrombin to form thrombin.. Activated by calcium and phospholipids. Snake prothrombin activator that attacks the hemostatic system of prey. This protein is functionally similar to blood coagulation factor Xa. Induces cyanosis and death in mice at 1 mg/kg body weight during blood clotting. This Tropidechis carinatus (Australian rough-scaled snake) protein is Venom prothrombin activator trocarin-D.